Reading from the N-terminus, the 130-residue chain is uncharacterized protein (130 aa).

A helical transmembrane segment spans residues 21 to 43; that stretch reads VAVCTVAAEVLAIFTLVCTRVFI.

The protein resides in the membrane. This is an uncharacterized protein from Saccharomyces cerevisiae (strain ATCC 204508 / S288c) (Baker's yeast).